The primary structure comprises 207 residues: Uracil phosphoribosyltransferase (207 aa).

Residues arginine 77, arginine 102, and 129 to 137 contribute to the 5-phospho-alpha-D-ribose 1-diphosphate site; that span reads DPMLATGVS. Residues isoleucine 192 and 197-199 each bind uracil; that span reads GDA. Aspartate 198 is a 5-phospho-alpha-D-ribose 1-diphosphate binding site.

This sequence belongs to the UPRTase family. Mg(2+) is required as a cofactor.

It carries out the reaction UMP + diphosphate = 5-phospho-alpha-D-ribose 1-diphosphate + uracil. It functions in the pathway pyrimidine metabolism; UMP biosynthesis via salvage pathway; UMP from uracil: step 1/1. With respect to regulation, allosterically activated by GTP. Functionally, catalyzes the conversion of uracil and 5-phospho-alpha-D-ribose 1-diphosphate (PRPP) to UMP and diphosphate. The protein is Uracil phosphoribosyltransferase of Fervidobacterium nodosum (strain ATCC 35602 / DSM 5306 / Rt17-B1).